Consider the following 164-residue polypeptide: MVKLTQRLGGLVLRFAAFCAALGAVIAMITSRERSSFFVISLVAKYSDLAAFKYFVIANAIVTVYSFLVLFLPKESLLWKFVVVLDLMVTMLLTSSLSAAVAVAQVGKRGNANAGWLPICGQVPRFCDQITGALIAGLVALVLYVFLLIFSIHHVVDPFLLRKS.

Residues 1 to 8 (MVKLTQRL) are Cytoplasmic-facing. A helical transmembrane segment spans residues 9–29 (GGLVLRFAAFCAALGAVIAMI). The Extracellular segment spans residues 30-51 (TSRERSSFFVISLVAKYSDLAA). A helical transmembrane segment spans residues 52 to 72 (FKYFVIANAIVTVYSFLVLFL). The Cytoplasmic portion of the chain corresponds to 73-80 (PKESLLWK). The helical transmembrane segment at 81–101 (FVVVLDLMVTMLLTSSLSAAV) threads the bilayer. Residues 102–129 (AVAQVGKRGNANAGWLPICGQVPRFCDQ) lie on the Extracellular side of the membrane. The chain crosses the membrane as a helical span at residues 130-150 (ITGALIAGLVALVLYVFLLIF). Residues 151 to 164 (SIHHVVDPFLLRKS) are Cytoplasmic-facing.

Belongs to the Casparian strip membrane proteins (CASP) family. In terms of assembly, homodimer and heterodimers.

It is found in the cell membrane. The chain is CASP-like protein 1C2 from Arabidopsis thaliana (Mouse-ear cress).